A 111-amino-acid polypeptide reads, in one-letter code: Aspartate 1-decarboxylase (111 aa).

The Schiff-base intermediate with substrate; via pyruvic acid role is filled by serine 25. Residue serine 25 is modified to Pyruvic acid (Ser). Threonine 57 is a substrate binding site. Residue tyrosine 58 is the Proton donor of the active site. 73 to 75 (GPA) contacts substrate.

It belongs to the PanD family. In terms of assembly, heterooctamer of four alpha and four beta subunits. Pyruvate serves as cofactor. Post-translationally, is synthesized initially as an inactive proenzyme, which is activated by self-cleavage at a specific serine bond to produce a beta-subunit with a hydroxyl group at its C-terminus and an alpha-subunit with a pyruvoyl group at its N-terminus.

The protein localises to the cytoplasm. It carries out the reaction L-aspartate + H(+) = beta-alanine + CO2. Its pathway is cofactor biosynthesis; (R)-pantothenate biosynthesis; beta-alanine from L-aspartate: step 1/1. In terms of biological role, catalyzes the pyruvoyl-dependent decarboxylation of aspartate to produce beta-alanine. This Francisella tularensis subsp. tularensis (strain FSC 198) protein is Aspartate 1-decarboxylase.